We begin with the raw amino-acid sequence, 591 residues long: Autotransporter adhesin NhhA (591 aa).

The N-terminal stretch at 1–51 is a signal peptide; the sequence is MNKIYRIIWNSALNAWVVVSELTRNHTKRASATVKTAVLATLLFATVQASA. The surface exposed passenger domain stretch occupies residues 52–503; sequence NNEEQEEDLY…TNVAQLKGVA (452 aa). Residues 504 to 591 are translocator domain; it reads QNLNNRIDNV…GASASVGYQW (88 aa). Transmembrane regions (beta stranded) follow at residues 537-547, 551-561, 570-576, and 580-591; these read GKSMMAIGGGT, EAGYAIGYSSI, KGTASGN, and HFGASASVGYQW.

Belongs to the autotransporter-2 (AT-2) (TC 1.B.40) family. In terms of assembly, homotrimer.

It localises to the cell surface. It is found in the cell outer membrane. Functionally, involved in adhesion of capsulated meningococci to host epithelial cells. Interacts with laminin and heparan sulfate, promoting the adherence to the extracellular matrix (ECM) components. This chain is Autotransporter adhesin NhhA, found in Neisseria meningitidis serogroup B (strain ATCC BAA-335 / MC58).